The chain runs to 262 residues: NAD-dependent glucose-6-phosphate dehydrogenase (262 aa).

NAD(+) contacts are provided by N90, S115, Y152, and K156. The active-site Proton acceptor is the Y152.

Belongs to the NAD(P)-dependent epimerase/dehydratase family. As to quaternary structure, homodimer.

The enzyme catalyses D-glucose 6-phosphate + NAD(+) = 6-phospho-D-glucono-1,5-lactone + NADH + H(+). The protein operates within carbohydrate degradation; pentose phosphate pathway. Catalyzes the NAD-dependent oxidation of glucose 6-phosphate to 6-phosphogluconolactone. This Haloferax volcanii (strain ATCC 29605 / DSM 3757 / JCM 8879 / NBRC 14742 / NCIMB 2012 / VKM B-1768 / DS2) (Halobacterium volcanii) protein is NAD-dependent glucose-6-phosphate dehydrogenase.